The following is a 575-amino-acid chain: MATIPRRAYAEMFGPTIGDRLRLADTELILEVEDDLTLRAGGYGEEVKFGGGKTIRDGMGQGQRVNGPGAADAVDCVITNALIVDHWGIVKADIGLRGNRIAAIGKAGNPDIQPGVDIVIGPGTEVIAAEGLIVTAGGIDSHIHWICPQQIDEALASGVTTMLGGGTGPATGTFATTCTPGPENIARMLQAADAFPMNLGFFGKGNASRPEALRQQVDAGAIALKLHEDWGTTPAAIDCCLSVAEQTDIQVAIHTDTLNESGFVEDTVAAFKGRTIHTFHTEGAGGGHAPDIMKVVGEANVLPSSTNPTRPYTVNTLDEHLDMLMVCHHLDAGIAEDLAFAESRIRRETIAAEDILHDLGAISMMSSDSQAMGRVGEVVIRTWQTAHKMKVQRGKLPGDTDRHDNARIKRYIAKYTINPALAHGMSHEVGSIEVGKWADLVFWKPAFFGVKPSLVLKGGFIALAAMGDPNASIPTPQPVHYRPMFGSFGGALARTSLTFLSQAALADDVGTRYGLHKRLAAVRGIRSVKKADMIHNGATPVMEIDAQTYSVRADGQLLTCEPAQVLPMAQRYFLF.

In terms of domain architecture, Urease spans 137–575 (GGIDSHIHWI…LPMAQRYFLF (439 aa)). Ni(2+) contacts are provided by His-142, His-144, and Lys-225. Position 225 is an N6-carboxylysine (Lys-225). A substrate-binding site is contributed by His-227. Residues His-254 and His-280 each contribute to the Ni(2+) site. His-328 serves as the catalytic Proton donor. Asp-368 contacts Ni(2+).

It belongs to the metallo-dependent hydrolases superfamily. Urease alpha subunit family. As to quaternary structure, heterotrimer of UreA (gamma), UreB (beta) and UreC (alpha) subunits. Three heterotrimers associate to form the active enzyme. Ni cation is required as a cofactor. Carboxylation allows a single lysine to coordinate two nickel ions.

It localises to the cytoplasm. It carries out the reaction urea + 2 H2O + H(+) = hydrogencarbonate + 2 NH4(+). The protein operates within nitrogen metabolism; urea degradation; CO(2) and NH(3) from urea (urease route): step 1/1. This Leptothrix cholodnii (strain ATCC 51168 / LMG 8142 / SP-6) (Leptothrix discophora (strain SP-6)) protein is Urease subunit alpha.